The chain runs to 717 residues: Polyribonucleotide nucleotidyltransferase (717 aa).

Mg(2+)-binding residues include Asp486 and Asp492. The region spanning 553–612 is the KH domain; sequence PKIVQLQIDIDKISLVIGSTGKTVKAITDEFEVRVQIEQDGRITLFGTDSLKMQKAKAKI. The 94-residue stretch at 622 to 715 folds into the S1 motif domain; sequence GEIYDGIVKK…KFGKIELELV (94 aa). The disordered stretch occupies residues 659–689; that stretch reads RYGDMRHSRYGSGRHSRYGRDNRNTFGMNPP. Over residues 666-675 the composition is skewed to basic residues; it reads SRYGSGRHSR.

This sequence belongs to the polyribonucleotide nucleotidyltransferase family. The cofactor is Mg(2+).

It is found in the cytoplasm. It catalyses the reaction RNA(n+1) + phosphate = RNA(n) + a ribonucleoside 5'-diphosphate. Involved in mRNA degradation. Catalyzes the phosphorolysis of single-stranded polyribonucleotides processively in the 3'- to 5'-direction. This chain is Polyribonucleotide nucleotidyltransferase, found in Borrelia hermsii (strain HS1 / DAH).